The primary structure comprises 367 residues: Phospho-N-acetylmuramoyl-pentapeptide-transferase (367 aa).

10 helical membrane-spanning segments follow: residues 28 to 48 (GALMTAMLIAFVFGKPMIGWL), 75 to 95 (TMGGFLILLGVMVGTLLWADL), 96 to 116 (TNAYVWIVIFVTAGFGVIGFI), 134 to 154 (FKLVGEFAIALIAVVWATHTA), 175 to 195 (LMINIGPLFFVFGCVVIVGSG), 206 to 226 (GLAIVPVMIAAATFGVIAYVV), 243 to 263 (AGEILIFCGALIGAGIGFLWW), 271 to 291 (FMGDTGSLSLGGALGTIAVAI), 295 to 315 (LVLAIVGGLFVLELVSVMVQV), and 344 to 364 (TIVIRFWIIAVILALIGLATL).

It belongs to the glycosyltransferase 4 family. MraY subfamily. Requires Mg(2+) as cofactor.

The protein resides in the cell inner membrane. The catalysed reaction is UDP-N-acetyl-alpha-D-muramoyl-L-alanyl-gamma-D-glutamyl-meso-2,6-diaminopimeloyl-D-alanyl-D-alanine + di-trans,octa-cis-undecaprenyl phosphate = di-trans,octa-cis-undecaprenyl diphospho-N-acetyl-alpha-D-muramoyl-L-alanyl-D-glutamyl-meso-2,6-diaminopimeloyl-D-alanyl-D-alanine + UMP. It participates in cell wall biogenesis; peptidoglycan biosynthesis. Functionally, catalyzes the initial step of the lipid cycle reactions in the biosynthesis of the cell wall peptidoglycan: transfers peptidoglycan precursor phospho-MurNAc-pentapeptide from UDP-MurNAc-pentapeptide onto the lipid carrier undecaprenyl phosphate, yielding undecaprenyl-pyrophosphoryl-MurNAc-pentapeptide, known as lipid I. The sequence is that of Phospho-N-acetylmuramoyl-pentapeptide-transferase from Maricaulis maris (strain MCS10) (Caulobacter maris).